The primary structure comprises 354 residues: Glycerol-1-phosphate dehydrogenase [NAD(P)+] (354 aa).

Residues 102 to 106 and 124 to 127 each bind NAD(+); these read GRSID and TAAS. Aspartate 129 provides a ligand contact to substrate. An NAD(+)-binding site is contributed by serine 133. Aspartate 176 contacts substrate. Zn(2+) is bound by residues aspartate 176 and histidine 256. A substrate-binding site is contributed by histidine 260. Histidine 272 contacts Zn(2+).

The protein belongs to the glycerol-1-phosphate dehydrogenase family. Zn(2+) serves as cofactor.

Its subcellular location is the cytoplasm. It catalyses the reaction sn-glycerol 1-phosphate + NAD(+) = dihydroxyacetone phosphate + NADH + H(+). The catalysed reaction is sn-glycerol 1-phosphate + NADP(+) = dihydroxyacetone phosphate + NADPH + H(+). It participates in membrane lipid metabolism; glycerophospholipid metabolism. Its function is as follows. Catalyzes the NAD(P)H-dependent reduction of dihydroxyacetonephosphate (DHAP or glycerone phosphate) to glycerol 1-phosphate (G1P). The G1P thus generated is used as the glycerophosphate backbone of phospholipids in the cellular membranes of Archaea. The sequence is that of Glycerol-1-phosphate dehydrogenase [NAD(P)+] from Methanothrix thermoacetophila (strain DSM 6194 / JCM 14653 / NBRC 101360 / PT) (Methanosaeta thermophila).